Here is a 342-residue protein sequence, read N- to C-terminus: Aquaporin-8 (342 aa).

Transmembrane regions (helical) follow at residues 55 to 75 (FLAV…AIFT), 98 to 118 (VAGG…FAVL), and 126 to 146 (CIFY…TMFA). The short motif at 108–110 (NPA) is the NPA 1 element. N-linked (GlcNAc...) asparagine glycosylation is present at Asn-166. The next 2 helical transmembrane spans lie at 184 to 204 (TAFA…LAMC) and 215 to 235 (FLPI…SYNA). Residues 240 to 242 (NPS) carry the NPA 2 motif. A helical membrane pass occupies residues 266-286 (YTWFFVPVLGSHCGAIIGGAI). Residues 302 to 327 (TNSVSSMSYNEDNSTLTKRKQVSNIV) are compositionally biased toward polar residues. Residues 302–342 (TNSVSSMSYNEDNSTLTKRKQVSNIVHDSKGAKGSSTAPVN) are disordered. Asn-314 carries an N-linked (GlcNAc...) asparagine glycan.

The protein belongs to the MIP/aquaporin (TC 1.A.8) family.

The protein resides in the cell membrane. Aquaglyceroporin that may modulate the water content and osmolytes during anhydrobiosis. This is Aquaporin-8 from Milnesium tardigradum (Water bear).